The sequence spans 556 residues: Potassium-transporting ATPase potassium-binding subunit (556 aa).

The next 10 membrane-spanning stretches (helical) occupy residues 1 to 21 (MTWI…GIAQ), 60 to 80 (SYAR…YALQ), 130 to 150 (GLCV…VALI), 173 to 193 (LRIL…GGAV), 245 to 265 (PQPW…FSLP), 281 to 301 (ILAA…AAEF), 374 to 394 (GLYG…LLVG), 416 to 436 (ILVM…VPGL), 482 to 502 (AALG…ILAL), and 529 to 549 (LIVF…LTLG).

Belongs to the KdpA family. As to quaternary structure, the system is composed of three essential subunits: KdpA, KdpB and KdpC.

The protein resides in the cell membrane. Its function is as follows. Part of the high-affinity ATP-driven potassium transport (or Kdp) system, which catalyzes the hydrolysis of ATP coupled with the electrogenic transport of potassium into the cytoplasm. This subunit binds the extracellular potassium ions and delivers the ions to the membrane domain of KdpB through an intramembrane tunnel. The sequence is that of Potassium-transporting ATPase potassium-binding subunit from Cutibacterium acnes (strain DSM 16379 / KPA171202) (Propionibacterium acnes).